A 425-amino-acid polypeptide reads, in one-letter code: Keratin, type II cytoskeletal I (425 aa).

The tract at residues 1–16 (FLEQQNKVLETKWKLL) is coil 1A. Residues 1–296 (FLEQQNKVLE…YMLEGEEGRI (296 aa)) form the IF rod domain. The linker 1 stretch occupies residues 17-37 (QEQGTKGTTKRANLDPLFEKY). Residues 38–129 (IADLKKYLDN…TRDAAELSQV (92 aa)) form a coil 1B region. Positions 130 to 153 (HDQVTDTSVVLTMDNNRDLNLDSI) are linker 12. Positions 154 to 292 (IKEVKCQYEQ…STYRYMLEGE (139 aa)) are coil 2. The tract at residues 293–425 (EGRISGQIVN…STTSTTKKTY (133 aa)) is tail.

The protein belongs to the intermediate filament family. Heterotetramer of two type I and two type II keratins.

The chain is Keratin, type II cytoskeletal I from Xenopus laevis (African clawed frog).